We begin with the raw amino-acid sequence, 168 residues long: Photosystem I assembly protein Ycf3 (168 aa).

3 TPR repeats span residues 35–68 (AFTY…EIDP), 72–105 (SYIL…NPFL), and 120–153 (GEQA…TPGN).

The protein belongs to the Ycf3 family.

Its subcellular location is the plastid. It is found in the chloroplast thylakoid membrane. Essential for the assembly of the photosystem I (PSI) complex. May act as a chaperone-like factor to guide the assembly of the PSI subunits. The polypeptide is Photosystem I assembly protein Ycf3 (Phalaenopsis aphrodite subsp. formosana (Moth orchid)).